Reading from the N-terminus, the 206-residue chain is Undecaprenyl-diphosphatase (206 aa).

Helical transmembrane passes span 5–25 (YYWI…LIGG), 53–73 (FLSK…LLIF), 79–99 (IGIT…VSKY), 138–158 (VTLL…EAVL), and 164–184 (VYVG…GSWI).

The protein localises to the cell membrane. The catalysed reaction is di-trans,octa-cis-undecaprenyl diphosphate + H2O = di-trans,octa-cis-undecaprenyl phosphate + phosphate + H(+). This Sulfolobus acidocaldarius (strain ATCC 33909 / DSM 639 / JCM 8929 / NBRC 15157 / NCIMB 11770) protein is Undecaprenyl-diphosphatase (sepP).